The chain runs to 51 residues: Cyclic phosphodiesterase (51 aa).

Catalysis depends on histidine 11, which acts as the Proton donor/acceptor. Substrate is bound at residue threonine 13. Histidine 38 serves as the catalytic Proton donor/acceptor. Substrate-binding residues include serine 40 and tyrosine 43.

It belongs to the 2H phosphoesterase superfamily. CPD1 family.

Hydrolyzes ADP-ribose 1'',2''-cyclic phosphate (Appr&gt;1) that is produced during tRNA splicing into ADP-ribose 1''-phosphate (Appr-1''p). The polypeptide is Cyclic phosphodiesterase (Triticum aestivum (Wheat)).